The chain runs to 211 residues: tRNA (pseudouridine(54)-N(1))-methyltransferase (211 aa).

S-adenosyl-L-methionine is bound by residues Leu128, Gly150, and Cys183.

This sequence belongs to the methyltransferase superfamily. TrmY family. In terms of assembly, homodimer.

It localises to the cytoplasm. It carries out the reaction pseudouridine(54) in tRNA + S-adenosyl-L-methionine = N(1)-methylpseudouridine(54) in tRNA + S-adenosyl-L-homocysteine + H(+). Its function is as follows. Specifically catalyzes the N1-methylation of pseudouridine at position 54 (Psi54) in tRNAs. The chain is tRNA (pseudouridine(54)-N(1))-methyltransferase from Methanosarcina mazei (strain ATCC BAA-159 / DSM 3647 / Goe1 / Go1 / JCM 11833 / OCM 88) (Methanosarcina frisia).